The sequence spans 587 residues: Protein FRIGIDA-ESSENTIAL 1 (587 aa).

The C3H1-type zinc-finger motif lies at 96–123 (KRAALPCKFFAKGWCFNGVSCKFLHVKE). Disordered stretches follow at residues 264–346 (DMGS…SFTI), 368–421 (GDRP…HQET), and 467–492 (IKPAGHDSWHRSDGSSYKKTKKSDEI). The segment covering 294 to 304 (NGNSLSGSGSL) has biased composition (low complexity). The segment covering 470–479 (AGHDSWHRSD) has biased composition (basic and acidic residues).

As to quaternary structure, component of the transcription activator complex FRI-C composed of FRI, FRL1, SUF4, FLX and FES1. Interacts with FLX, (via C-terminus) with FRI (via C-terminus), and with RIN1, a component of the SWR1 chromatin-remodeling complex. Expressed in root and shoot apices and vasculature.

It localises to the nucleus. Transcriptional activator involved in the FRIGIDA-mediated vernalization pathway, but not in the autonomous flowering pathway. Acts cooperatively with FRI (FRIGIDA) or FRL1 (FRIGIDA-LIKE 1) to promote FLC (FLOWERING LOCUS C) expression. Required for the stabilization of the FRI-C complex. The sequence is that of Protein FRIGIDA-ESSENTIAL 1 (FES1) from Arabidopsis thaliana (Mouse-ear cress).